Reading from the N-terminus, the 423-residue chain is Gamma-glutamyl phosphate reductase (423 aa).

Belongs to the gamma-glutamyl phosphate reductase family.

It is found in the cytoplasm. The catalysed reaction is L-glutamate 5-semialdehyde + phosphate + NADP(+) = L-glutamyl 5-phosphate + NADPH + H(+). It participates in amino-acid biosynthesis; L-proline biosynthesis; L-glutamate 5-semialdehyde from L-glutamate: step 2/2. In terms of biological role, catalyzes the NADPH-dependent reduction of L-glutamate 5-phosphate into L-glutamate 5-semialdehyde and phosphate. The product spontaneously undergoes cyclization to form 1-pyrroline-5-carboxylate. The chain is Gamma-glutamyl phosphate reductase from Burkholderia orbicola (strain MC0-3).